A 136-amino-acid polypeptide reads, in one-letter code: Selenoprotein M (136 aa).

An N-terminal signal peptide occupies residues 1–19 (MWLPLPLLLGLLQLQPILS). Residues Cys38 and Sec41 each act as nucleophile in the active site. The segment at residues 38–41 (CGGU) is a cross-link (cysteinyl-selenocysteine (Cys-Sec)). A non-standard amino acid (selenocysteine) is located at residue Sec41. Residues 111–136 (SSPDAPVPAEFKMAPARASGDTKEDL) form a disordered region. Positions 133–136 (KEDL) match the Prevents secretion from ER motif.

It belongs to the selenoprotein M/F family.

Its subcellular location is the endoplasmic reticulum. Its function is as follows. May function as a thiol-disulfide oxidoreductase that participates in disulfide bond formation. This Xenopus laevis (African clawed frog) protein is Selenoprotein M (selenom).